The following is a 105-amino-acid chain: BLOC-1-related complex subunit 7 (105 aa).

It belongs to the BORCS7 family. Component of the BLOC-one-related complex (BORC) which is composed of BLOC1S1, BLOC1S2, BORCS5, BORCS6, BORCS7, BORCS8, KXD1 and SNAPIN.

The protein localises to the lysosome membrane. In terms of biological role, as part of the BORC complex may play a role in lysosomes movement and localization at the cell periphery. Associated with the cytosolic face of lysosomes, the BORC complex may recruit ARL8B and couple lysosomes to microtubule plus-end-directed kinesin motor. The protein is BLOC-1-related complex subunit 7 of Mus musculus (Mouse).